The following is a 261-amino-acid chain: uncharacterized protein (261 aa).

2 helical membrane passes run 4-21 (RLIA…LIVL) and 33-55 (FSIL…LVLF).

It localises to the cell membrane. This is an uncharacterized protein from Archaeoglobus fulgidus (strain ATCC 49558 / DSM 4304 / JCM 9628 / NBRC 100126 / VC-16).